The following is a 252-amino-acid chain: Flap endonuclease Xni (252 aa).

Asp103 lines the Mg(2+) pocket. Residues Val159–Leu248 form the 5'-3' exonuclease domain. The K(+) site is built by Leu170, Ala171, Pro179, Ile181, and Ile184. The tract at residues Gly183–Thr188 is interaction with DNA.

This sequence belongs to the Xni family. Mg(2+) serves as cofactor. The cofactor is K(+).

Its function is as follows. Has flap endonuclease activity. During DNA replication, flap endonucleases cleave the 5'-overhanging flap structure that is generated by displacement synthesis when DNA polymerase encounters the 5'-end of a downstream Okazaki fragment. The chain is Flap endonuclease Xni from Photorhabdus laumondii subsp. laumondii (strain DSM 15139 / CIP 105565 / TT01) (Photorhabdus luminescens subsp. laumondii).